A 122-amino-acid chain; its full sequence is Large ribosomal subunit protein uL14 (122 aa).

It belongs to the universal ribosomal protein uL14 family. Part of the 50S ribosomal subunit. Forms a cluster with proteins L3 and L19. In the 70S ribosome, L14 and L19 interact and together make contacts with the 16S rRNA in bridges B5 and B8.

Binds to 23S rRNA. Forms part of two intersubunit bridges in the 70S ribosome. This Campylobacter concisus (strain 13826) protein is Large ribosomal subunit protein uL14.